The sequence spans 146 residues: Hemoglobin subunit beta (146 aa).

Valine 1 bears the N-acetylvaline mark. A Globin domain is found at 2 to 146; it reads HLSGEEKAAV…VANALAHKYH (145 aa). Threonine 12 carries the post-translational modification Phosphothreonine. Residue serine 44 is modified to Phosphoserine. Residue lysine 59 is modified to N6-acetyllysine. Histidine 63 is a heme b binding site. Lysine 82 is subject to N6-acetyllysine. Histidine 92 contacts heme b. Cysteine 93 is subject to S-nitrosocysteine. At lysine 144 the chain carries N6-acetyllysine.

This sequence belongs to the globin family. Heterotetramer of two alpha chains and two beta chains. Red blood cells.

Functionally, involved in oxygen transport from the lung to the various peripheral tissues. This is Hemoglobin subunit beta (HBB) from Pteropus alecto (Black flying fox).